The following is a 553-amino-acid chain: Arginine--tRNA ligase (553 aa).

Residues 122 to 132 carry the 'HIGH' region motif; it reads ANPTGFLHVGH.

Belongs to the class-I aminoacyl-tRNA synthetase family. Monomer.

Its subcellular location is the cytoplasm. The enzyme catalyses tRNA(Arg) + L-arginine + ATP = L-arginyl-tRNA(Arg) + AMP + diphosphate. In Mesoplasma florum (strain ATCC 33453 / NBRC 100688 / NCTC 11704 / L1) (Acholeplasma florum), this protein is Arginine--tRNA ligase.